We begin with the raw amino-acid sequence, 632 residues long: MSAESHPTESQMTPKKLFYLTLGSIGVVYGDIGTSPLYAFREALKPVAHDGLTRFEVISLISLMIWALTIIVTIKYVLFLLRADNEGEGGTLSLLALLMKTANGHTAILMLLGLLGAALFLGDAMITPALSVLSAVEGLKLVTPRLSEYIVPISVVILALLFVVQSRGTGAVAKFFGPITAVWFLVMAAAGISHISDDFGILAAFNPYYAVSFLLHEGFYGVVVLGAVFLTVTGAEALYADLGHFGRRPIQWAWFLLVFPSLTLNYLGQGALVLGKPETMSDPFYLMYPQWALLPVVILATAATIIASQAVITGAFSMVRQGINLGFLPRREILFTSETNTGQIFVPSVNAVLFIGVIFLVLSFKTSDALATAYGISVTGAMVVTSIMAFEFVRARWNWSLPVAVIALAPLVILELIFLGANLLKIHDGGYIPILIATAFTVIMWTWRRGTAILMEKTRHTDIPLASFVSSIERKSEHSPAQVPGTAIFLTSDPESAPAALLHNLKHNHVLHDRNVILTIRTVNKPRVPSQDRYKVEQISERFSRVELLFGFMESQNVSQALATLRKAGLKFDIMSTSFYLGRRKLVPDANSGMPYWQDRFYILLANAASLPSDYFHLPANRVVELGSQIIV.

The next 12 membrane-spanning stretches (helical) occupy residues Leu17 to Leu37, Leu60 to Leu80, Thr106 to Ile126, Leu146 to Ser166, Phe175 to Ile195, Ala210 to Leu230, Trp254 to Leu274, Ala292 to Ile312, Ile344 to Phe364, Leu370 to Phe390, Leu401 to Ala421, and Ile426 to Thr446.

It belongs to the HAK/KUP transporter (TC 2.A.72) family.

Its subcellular location is the cell inner membrane. The enzyme catalyses K(+)(in) + H(+)(in) = K(+)(out) + H(+)(out). Functionally, transport of potassium into the cell. Likely operates as a K(+):H(+) symporter. This chain is Probable potassium transport system protein Kup, found in Rhizobium rhizogenes (Agrobacterium rhizogenes).